Here is a 194-residue protein sequence, read N- to C-terminus: NAD(P)H:quinone oxidoreductase (194 aa).

It belongs to the SsuE family. As to quaternary structure, homotetramer. The cofactor is FMN.

It carries out the reaction a quinone + NADH + H(+) = a quinol + NAD(+). The enzyme catalyses a quinone + NADPH + H(+) = a quinol + NADP(+). Functionally, the enzyme apparently serves as a quinone reductase in connection with conjugation reactions of hydroquinones involved in detoxification pathways. The sequence is that of NAD(P)H:quinone oxidoreductase from Solanum tuberosum (Potato).